The chain runs to 349 residues: Protein Wnt-7b (349 aa).

A signal peptide spans 1-24 (MHRNFRKWIFYVFLCFGVLYVKLG). Disulfide bonds link Cys-73–Cys-84, Cys-123–Cys-131, Cys-133–Cys-152, Cys-200–Cys-214, and Cys-202–Cys-209. Asn-83 and Asn-127 each carry an N-linked (GlcNAc...) asparagine glycan. Ser-206 is lipidated: O-palmitoleoyl serine; by PORCN. Residues 238–266 (VEVVRASRLRQPTFLRIKQLRSYQKPMET) are disordered linker. 6 disulfide bridges follow: Cys-278-Cys-309, Cys-294-Cys-304, Cys-308-Cys-348, Cys-324-Cys-339, Cys-326-Cys-336, and Cys-331-Cys-332. A glycan (N-linked (GlcNAc...) asparagine) is linked at Asn-295.

Belongs to the Wnt family. In terms of assembly, forms a soluble 1:1 complex with AFM; this prevents oligomerization and is required for prolonged biological activity. The complex with AFM may represent the physiological form in body fluids. Interacts with FZD1 and FZD10. Interacts with FZD4 (in vitro). Interacts with PORCN. Interacts with glypican GPC3. Interacts (via intrinsically disordered linker region) with RECK; interaction with RECK confers ligand selectivity for Wnt7 in brain endothelial cells and allows these cells to selectively respond to Wnt7. Post-translationally, palmitoleoylation is required for efficient binding to frizzled receptors. Depalmitoleoylation leads to Wnt signaling pathway inhibition. As to expression, moderately expressed in fetal brain, weakly expressed in fetal lung and kidney, and faintly expressed in adult brain, lung and prostate.

The protein localises to the secreted. The protein resides in the extracellular space. Its subcellular location is the extracellular matrix. In terms of biological role, ligand for members of the frizzled family of seven transmembrane receptors that functions in the canonical Wnt/beta-catenin signaling pathway. Required for normal fusion of the chorion and the allantois during placenta development. Required for central nervous system (CNS) angiogenesis and blood-brain barrier regulation. The sequence is that of Protein Wnt-7b (WNT7B) from Homo sapiens (Human).